Consider the following 373-residue polypeptide: ATP synthase gamma chain 1, chloroplastic (373 aa).

The transit peptide at 1–50 (MACSNLTTMWVSSKPSLSADSSSLSFRSVLKCPTNTSSPPSRASSVSPLQ) directs the protein to the chloroplast. Cysteine 139 is an active-site residue. Cysteine 249 and cysteine 255 are disulfide-bonded. Residue serine 347 is modified to Phosphoserine.

The protein belongs to the ATPase gamma chain family. In terms of assembly, F-type ATPases have 2 components, CF(1) - the catalytic core - and CF(0) - the membrane proton channel. CF(1) has five subunits: alpha(3), beta(3), gamma(1), delta(1), epsilon(1). CF(0) has four main subunits: a, b, b' and c. Interacts with PAB.

It localises to the plastid. The protein localises to the chloroplast thylakoid membrane. Produces ATP from ADP in the presence of a proton gradient across the membrane. The gamma chain is believed to be important in regulating ATPase activity and the flow of protons through the CF(0) complex. This is ATP synthase gamma chain 1, chloroplastic (ATPC1) from Arabidopsis thaliana (Mouse-ear cress).